Here is a 304-residue protein sequence, read N- to C-terminus: Protoheme IX farnesyltransferase 1 (304 aa).

The next 8 helical transmembrane spans lie at 24–44 (VVVLMLITSLIGMLLATKAPL), 47–67 (FVPWQVLIFGNLGIGLCAGAA), 99–119 (MALGFALLLALAGMAVLLAFT), 122–142 (LTAWLTLASLLGYAALYTGFL), 150–170 (IVIGGLAGAAPPLLGWVAITG), 176–196 (PLLLVLIIFAWTPPHFWALCI), 228–248 (LVLFAVSLMPFVIHMSGLVYL), and 280–300 (YSIVYLFLLFMALLVDHYLPL).

This sequence belongs to the UbiA prenyltransferase family. Protoheme IX farnesyltransferase subfamily.

Its subcellular location is the cell inner membrane. The catalysed reaction is heme b + (2E,6E)-farnesyl diphosphate + H2O = Fe(II)-heme o + diphosphate. It participates in porphyrin-containing compound metabolism; heme O biosynthesis; heme O from protoheme: step 1/1. Converts heme B (protoheme IX) to heme O by substitution of the vinyl group on carbon 2 of heme B porphyrin ring with a hydroxyethyl farnesyl side group. The chain is Protoheme IX farnesyltransferase 1 from Pseudomonas aeruginosa (strain UCBPP-PA14).